Here is a 500-residue protein sequence, read N- to C-terminus: L-arabinose isomerase (500 aa).

Residues E306, E333, H350, and H450 each contribute to the Mn(2+) site.

The protein belongs to the arabinose isomerase family. As to quaternary structure, homohexamer. Mn(2+) serves as cofactor.

The catalysed reaction is beta-L-arabinopyranose = L-ribulose. Its pathway is carbohydrate degradation; L-arabinose degradation via L-ribulose; D-xylulose 5-phosphate from L-arabinose (bacterial route): step 1/3. In terms of biological role, catalyzes the conversion of L-arabinose to L-ribulose. This Salmonella paratyphi A (strain ATCC 9150 / SARB42) protein is L-arabinose isomerase.